The primary structure comprises 393 residues: Probable RNA methyltransferase sce3898 (393 aa).

Glu82 functions as the Proton acceptor in the catalytic mechanism. The 240-residue stretch at 90–329 (RPGRYSACVS…VRSARLDAFR (240 aa)) folds into the Radical SAM core domain. A disulfide bridge links Cys97 with Cys353. Positions 104, 108, and 111 each coordinate [4Fe-4S] cluster. S-adenosyl-L-methionine-binding positions include 157–158 (GE), 212–214 (SLG), and Asn294. Cys353 acts as the S-methylcysteine intermediate in catalysis. The tract at residues 357–393 (ARPSAEAQRPGGRRAPPRPGATAGAADVGPSAPPRPA) is disordered. The span at 373-382 (PRPGATAGAA) shows a compositional bias: low complexity.

The protein belongs to the radical SAM superfamily. RlmN family. Requires [4Fe-4S] cluster as cofactor.

It is found in the cytoplasm. The chain is Probable RNA methyltransferase sce3898 from Sorangium cellulosum (strain So ce56) (Polyangium cellulosum (strain So ce56)).